The following is a 118-amino-acid chain: UPF0295 protein BT9727_0449 (118 aa).

2 helical membrane passes run 12–32 (IRTF…LGVF) and 43–63 (FMMV…WIGM).

It belongs to the UPF0295 family.

It localises to the cell membrane. The protein is UPF0295 protein BT9727_0449 of Bacillus thuringiensis subsp. konkukian (strain 97-27).